We begin with the raw amino-acid sequence, 311 residues long: Ornithine carbamoyltransferase (311 aa).

Carbamoyl phosphate-binding positions include 54-57 (STRT), Gln81, Arg105, and 132-135 (HPCQ). L-ornithine is bound by residues Asn163, Asp221, and 225–226 (SM). Residues 261–262 (CL) and Arg289 each bind carbamoyl phosphate.

This sequence belongs to the aspartate/ornithine carbamoyltransferase superfamily. OTCase family.

The protein resides in the cytoplasm. The enzyme catalyses carbamoyl phosphate + L-ornithine = L-citrulline + phosphate + H(+). It functions in the pathway amino-acid degradation; L-arginine degradation via ADI pathway; carbamoyl phosphate from L-arginine: step 2/2. Reversibly catalyzes the transfer of the carbamoyl group from carbamoyl phosphate (CP) to the N(epsilon) atom of ornithine (ORN) to produce L-citrulline. The sequence is that of Ornithine carbamoyltransferase from Azoarcus sp. (strain BH72).